The chain runs to 137 residues: Actin-depolymerizing factor 2 (137 aa).

One can recognise an ADF-H domain in the interval 5 to 137 (ASGMAVHDDC…GLDVFKSRTN (133 aa)). Position 6 is a phosphoserine (Ser-6).

The protein belongs to the actin-binding proteins ADF family. Interacts with AIP1-1.

The protein resides in the cytoplasm. The protein localises to the cytoskeleton. In terms of biological role, actin-depolymerizing protein. Severs actin filaments (F-actin) and binds to actin monomers. Required for normal cell growth, plant development, cell organ expansion and flowering. Essential for root-knot nematode infection. The protein is Actin-depolymerizing factor 2 (ADF2) of Arabidopsis thaliana (Mouse-ear cress).